A 185-amino-acid chain; its full sequence is MKRWYVVHAYSGFEKSVAQALRDRISRIEIQDRFGDVLVPAEEVVEMRSGQKRRSEHKFFPGYVLIQIETYYEGGVPRIDNECWHLVKETPKVMGFIGGTADRPLPISSDEADAILRRVQDGAEKPRPKVLFEPGQMVRVIDGPFNDFDGLVEEVNYEKNRLRVAVLIFGRPTPVDLEFGQVQKS.

Residues proline 134–leucine 162 form the KOW domain.

It belongs to the NusG family.

Its function is as follows. Participates in transcription elongation, termination and antitermination. The chain is Transcription termination/antitermination protein NusG from Xylella fastidiosa (strain 9a5c).